We begin with the raw amino-acid sequence, 372 residues long: Queuine tRNA-ribosyltransferase (372 aa).

Asp89 (proton acceptor) is an active-site residue. Residues 89-93 (DSGGF), Asp161, and Gly232 each bind substrate. The RNA binding stretch occupies residues 262-268 (GIGDLPS). Catalysis depends on Asp281, which acts as the Nucleophile. Residues 286-290 (TKAAR) form an RNA binding; important for wobble base 34 recognition region. Residues Cys319, Cys321, Cys324, and His351 each contribute to the Zn(2+) site.

The protein belongs to the queuine tRNA-ribosyltransferase family. In terms of assembly, homodimer. Within each dimer, one monomer is responsible for RNA recognition and catalysis, while the other monomer binds to the replacement base PreQ1. Requires Zn(2+) as cofactor.

The catalysed reaction is 7-aminomethyl-7-carbaguanine + guanosine(34) in tRNA = 7-aminomethyl-7-carbaguanosine(34) in tRNA + guanine. The protein operates within tRNA modification; tRNA-queuosine biosynthesis. Its function is as follows. Catalyzes the base-exchange of a guanine (G) residue with the queuine precursor 7-aminomethyl-7-deazaguanine (PreQ1) at position 34 (anticodon wobble position) in tRNAs with GU(N) anticodons (tRNA-Asp, -Asn, -His and -Tyr). Catalysis occurs through a double-displacement mechanism. The nucleophile active site attacks the C1' of nucleotide 34 to detach the guanine base from the RNA, forming a covalent enzyme-RNA intermediate. The proton acceptor active site deprotonates the incoming PreQ1, allowing a nucleophilic attack on the C1' of the ribose to form the product. After dissociation, two additional enzymatic reactions on the tRNA convert PreQ1 to queuine (Q), resulting in the hypermodified nucleoside queuosine (7-(((4,5-cis-dihydroxy-2-cyclopenten-1-yl)amino)methyl)-7-deazaguanosine). The chain is Queuine tRNA-ribosyltransferase from Chlamydia pneumoniae (Chlamydophila pneumoniae).